The following is a 435-amino-acid chain: Ribosomal protein uS12 methylthiotransferase RimO (435 aa).

The 111-residue stretch at 3–113 (HKVGFVSLGC…VVNAVHQYLP (111 aa)) folds into the MTTase N-terminal domain. Positions 12, 48, 77, 144, 148, and 151 each coordinate [4Fe-4S] cluster. In terms of domain architecture, Radical SAM core spans 130–367 (LTPRHYAYLK…MQVQAEISRN (238 aa)). Positions 370–435 (KNKIGSTQTV…DDYDLYASLV (66 aa)) constitute a TRAM domain.

This sequence belongs to the methylthiotransferase family. RimO subfamily. Requires [4Fe-4S] cluster as cofactor.

It localises to the cytoplasm. It carries out the reaction L-aspartate(89)-[ribosomal protein uS12]-hydrogen + (sulfur carrier)-SH + AH2 + 2 S-adenosyl-L-methionine = 3-methylsulfanyl-L-aspartate(89)-[ribosomal protein uS12]-hydrogen + (sulfur carrier)-H + 5'-deoxyadenosine + L-methionine + A + S-adenosyl-L-homocysteine + 2 H(+). Catalyzes the methylthiolation of an aspartic acid residue of ribosomal protein uS12. This is Ribosomal protein uS12 methylthiotransferase RimO from Legionella pneumophila subsp. pneumophila (strain Philadelphia 1 / ATCC 33152 / DSM 7513).